Reading from the N-terminus, the 415-residue chain is tRNA(Ile2) 2-agmatinylcytidine synthetase TiaS (415 aa).

The protein belongs to the TiaS family.

The protein resides in the cytoplasm. It catalyses the reaction cytidine(34) in tRNA(Ile2) + agmatine + ATP + H2O = 2-agmatinylcytidine(34) in tRNA(Ile2) + AMP + 2 phosphate + 2 H(+). Its function is as follows. ATP-dependent agmatine transferase that catalyzes the formation of 2-agmatinylcytidine (agm2C) at the wobble position (C34) of tRNA(Ile2), converting the codon specificity from AUG to AUA. The protein is tRNA(Ile2) 2-agmatinylcytidine synthetase TiaS of Methanocorpusculum labreanum (strain ATCC 43576 / DSM 4855 / Z).